The following is a 70-amino-acid chain: Large ribosomal subunit protein bL31 (70 aa).

Zn(2+)-binding residues include Cys16, Cys18, Cys38, and Cys41.

This sequence belongs to the bacterial ribosomal protein bL31 family. Type A subfamily. In terms of assembly, part of the 50S ribosomal subunit. It depends on Zn(2+) as a cofactor.

Its function is as follows. Binds the 23S rRNA. The sequence is that of Large ribosomal subunit protein bL31 from Mycolicibacterium gilvum (strain PYR-GCK) (Mycobacterium gilvum (strain PYR-GCK)).